We begin with the raw amino-acid sequence, 100 residues long: NADH-quinone oxidoreductase subunit K (100 aa).

Helical transmembrane passes span 2 to 22, 29 to 49, and 60 to 80; these read IGLT…LVGI, IMLF…LAAI, and IIAF…LGLL.

It belongs to the complex I subunit 4L family. In terms of assembly, NDH-1 is composed of 14 different subunits. Subunits NuoA, H, J, K, L, M, N constitute the membrane sector of the complex.

The protein localises to the cell inner membrane. It carries out the reaction a quinone + NADH + 5 H(+)(in) = a quinol + NAD(+) + 4 H(+)(out). Its function is as follows. NDH-1 shuttles electrons from NADH, via FMN and iron-sulfur (Fe-S) centers, to quinones in the respiratory chain. The immediate electron acceptor for the enzyme in this species is believed to be ubiquinone. Couples the redox reaction to proton translocation (for every two electrons transferred, four hydrogen ions are translocated across the cytoplasmic membrane), and thus conserves the redox energy in a proton gradient. This Campylobacter concisus (strain 13826) protein is NADH-quinone oxidoreductase subunit K.